We begin with the raw amino-acid sequence, 254 residues long: CRISPR-associated endoribonuclease Cas6 1 (254 aa).

Tyr32 functions as the Proton acceptor in the catalytic mechanism. His47 (proton donor) is an active-site residue.

This sequence belongs to the CRISPR-associated protein Cas6/Cse3/CasE family.

Functionally, CRISPR (clustered regularly interspaced short palindromic repeat) is an adaptive immune system that provides protection against mobile genetic elements (viruses, transposable elements and conjugative plasmids). CRISPR clusters contain sequences complementary to antecedent mobile elements and target invading nucleic acids. CRISPR clusters are transcribed and processed into CRISPR RNA (crRNA). This protein processes pre-crRNA into individual crRNA units. The chain is CRISPR-associated endoribonuclease Cas6 1 (cas6a) from Methanocaldococcus jannaschii (strain ATCC 43067 / DSM 2661 / JAL-1 / JCM 10045 / NBRC 100440) (Methanococcus jannaschii).